The chain runs to 883 residues: Alanine--tRNA ligase (883 aa).

4 residues coordinate Zn(2+): H565, H569, C675, and H679.

The protein belongs to the class-II aminoacyl-tRNA synthetase family. Zn(2+) serves as cofactor.

The protein localises to the cytoplasm. It carries out the reaction tRNA(Ala) + L-alanine + ATP = L-alanyl-tRNA(Ala) + AMP + diphosphate. In terms of biological role, catalyzes the attachment of alanine to tRNA(Ala) in a two-step reaction: alanine is first activated by ATP to form Ala-AMP and then transferred to the acceptor end of tRNA(Ala). Also edits incorrectly charged Ser-tRNA(Ala) and Gly-tRNA(Ala) via its editing domain. This Rhodospirillum rubrum (strain ATCC 11170 / ATH 1.1.1 / DSM 467 / LMG 4362 / NCIMB 8255 / S1) protein is Alanine--tRNA ligase.